The chain runs to 513 residues: Zinc finger protein RFP (513 aa).

The RING-type zinc-finger motif lies at 16–57; sequence CPVCLQYFAEPMMLDCGHNICCACLARCWGTAETNVSCPQCR. C96, H99, C118, and H124 together coordinate Zn(2+). The B box-type zinc finger occupies 96-127; it reads CEKHREPLKLYCEEDQMPICVVCDRSREHRGH. 2 coiled-coil regions span residues 132–172 and 282–311; these read LEEA…AELL and QKCLFLTESLKQFTEKMQSDMEKIQELREA. One can recognise a B30.2/SPRY domain in the interval 298 to 492; the sequence is MQSDMEKIQE…SAAPLIICPM (195 aa).

It belongs to the TRIM/RBCC family. In terms of assembly, homomultimerizes. Part of a complex consisting of TRIM27, USP7 and MAGEL2; directly interacts with USP7. Interacts with PML, EIF3S6, EPC1, CHD4 and EID1. Interacts with MAGED4, MAGEF1 and MAGEL2. Interacts with PTPN11. Interacts with autophagy receptor p62/SQSTM1. As to quaternary structure, (Microbial infection) Interacts with M.tuberculosis PtpA, whick blocks TRIM27-promoted JNK/p38 MAPK pathway activation and cell apoptosis. (Microbial infection) Interacts with herpes simplex virus protein ICP0. In terms of tissue distribution, expressed in testis namely within the seminiferous tubules.

It localises to the nucleus. It is found in the cytoplasm. The protein localises to the PML body. The protein resides in the early endosome. Its subcellular location is the mitochondrion. It carries out the reaction S-ubiquitinyl-[E2 ubiquitin-conjugating enzyme]-L-cysteine + [acceptor protein]-L-lysine = [E2 ubiquitin-conjugating enzyme]-L-cysteine + N(6)-ubiquitinyl-[acceptor protein]-L-lysine.. It participates in protein modification; protein ubiquitination. In terms of biological role, E3 ubiquitin-protein ligase that mediates ubiquitination of various substrates and thereby plays a role in diffent processes including proliferation, innate immunity, apoptosis, immune response or autophagy. Ubiquitinates PIK3C2B and inhibits its activity by mediating the formation of 'Lys-48'-linked polyubiquitin chains; the function inhibits CD4 T-cell activation. Acts as a regulator of retrograde transport: together with MAGEL2, mediates the formation of 'Lys-63'-linked polyubiquitin chains at 'Lys-220' of WASHC1, leading to promote endosomal F-actin assembly. Has a transcriptional repressor activity by cooperating with EPC1. Induces apoptosis by activating Jun N-terminal kinase and p38 kinase and also increases caspase-3-like activity independently of mitochondrial events. May function in male germ cell development. Has DNA-binding activity and preferentially bound to double-stranded DNA. Forms a complex with and ubiquitinates the ubiquitin-specific protease USP7, which in turn deubiquitinates RIPK1 resulting in the positive regulation of TNF-alpha-induced apoptosis. In addition, acts with USP7 or PTPN11 as an inhibitor of the antiviral signaling pathway by promoting kinase TBK1 ubiquitination and degradation. Acts as a negative regulator of NOD2 signaling by mediating ubiquitination of NOD2, promoting its degradation by the proteasome. Alternatively, facilitates mitophagy via stabilization of active TBK1. Negatively regulates autophagy flux under basal conditions by directly polyubiquitinating ULK1. During starvation-induced autophagy, catalyzes non-degradative ubiquitination of the kinase STK38L promoting its activation and phosphorylation of ULK1 leading to its ubiquitination and degradation to restrain the amplitude and duration of autophagy. (Microbial infection) Positively regulates hepatitis C virus replication by suppressing type I IFN response during infection. The sequence is that of Zinc finger protein RFP from Homo sapiens (Human).